Consider the following 246-residue polypeptide: Probable ABC transporter permease protein BMEII0107 (246 aa).

6 helical membrane passes run 12-32 (LLSF…GAVV), 63-83 (VLSG…LMGW), 94-114 (WVQF…IVTL), 122-142 (IFVI…QGVI), 172-192 (VPFI…TVVA), and 211-231 (LYYD…LGLF). The 181-residue stretch at 56 to 236 (IFASLRRVLS…ILGLFMDRLL (181 aa)) folds into the ABC transmembrane type-1 domain.

Belongs to the binding-protein-dependent transport system permease family. As to quaternary structure, the complex is composed of two ATP-binding proteins (BMEII0108), two transmembrane proteins (BMEII0107) and a solute-binding protein (BMEII0109).

The protein resides in the cell inner membrane. In terms of biological role, probably part of an ABC transporter complex. Probably responsible for the translocation of the substrate across the membrane. This Brucella melitensis biotype 1 (strain ATCC 23456 / CCUG 17765 / NCTC 10094 / 16M) protein is Probable ABC transporter permease protein BMEII0107.